Consider the following 490-residue polypeptide: GTPase Der (490 aa).

EngA-type G domains are found at residues 3–166 (PVVA…AEAM) and 200–373 (IKLA…DSAT). GTP-binding positions include 9 to 16 (GRPNVGKS), 56 to 60 (DTGGI), 118 to 121 (NKVD), 206 to 213 (GKPNVGKS), 253 to 257 (DTAGV), and 318 to 321 (NKWD). Residues 374-458 (RRVSTSMLTR…PIQLRFQEGG (85 aa)) enclose the KH-like domain.

This sequence belongs to the TRAFAC class TrmE-Era-EngA-EngB-Septin-like GTPase superfamily. EngA (Der) GTPase family. In terms of assembly, associates with the 50S ribosomal subunit.

In terms of biological role, GTPase that plays an essential role in the late steps of ribosome biogenesis. The sequence is that of GTPase Der from Shewanella halifaxensis (strain HAW-EB4).